A 182-amino-acid chain; its full sequence is Ribulose bisphosphate carboxylase small subunit, chloroplastic (182 aa).

The N-terminal 58 residues, 1-58 (MASSMLSTATVASINRVSPAQATMVAPFTGLKSTPVFPTTRKTNSDITSITSNGGKVQ), are a transit peptide targeting the chloroplast.

Belongs to the RuBisCO small chain family. In terms of assembly, heterohexadecamer of 8 large and 8 small subunits.

Its subcellular location is the plastid. The protein localises to the chloroplast. Functionally, ruBisCO catalyzes two reactions: the carboxylation of D-ribulose 1,5-bisphosphate, the primary event in carbon dioxide fixation, as well as the oxidative fragmentation of the pentose substrate. Both reactions occur simultaneously and in competition at the same active site. Although the small subunit is not catalytic it is essential for maximal activity. This chain is Ribulose bisphosphate carboxylase small subunit, chloroplastic, found in Manihot esculenta (Cassava).